The sequence spans 166 residues: MFPMVTEFMNYGQQTVRAARYIGQGFMITLSHANRLPVTIQYPYEKLITSERFRGRIHFEFDKCIACEVCVRVCPIDLPVVDWKLENDIRKKRLLNYSIDFGICIFCGNCVEYCPTNCLSMTEEYELSTYDRHELNYNQIALGRLPMSIIDDYTIRTILNLPEIKT.

4Fe-4S ferredoxin-type domains lie at G55 to K84 and L95 to E124. Residues C64, C67, C70, C74, C104, C107, C110, and C114 each coordinate [4Fe-4S] cluster.

The protein belongs to the complex I 23 kDa subunit family. As to quaternary structure, NDH is composed of at least 16 different subunits, 5 of which are encoded in the nucleus. The cofactor is [4Fe-4S] cluster.

It localises to the plastid. It is found in the chloroplast thylakoid membrane. The enzyme catalyses a plastoquinone + NADH + (n+1) H(+)(in) = a plastoquinol + NAD(+) + n H(+)(out). It carries out the reaction a plastoquinone + NADPH + (n+1) H(+)(in) = a plastoquinol + NADP(+) + n H(+)(out). Functionally, NDH shuttles electrons from NAD(P)H:plastoquinone, via FMN and iron-sulfur (Fe-S) centers, to quinones in the photosynthetic chain and possibly in a chloroplast respiratory chain. The immediate electron acceptor for the enzyme in this species is believed to be plastoquinone. Couples the redox reaction to proton translocation, and thus conserves the redox energy in a proton gradient. This is NAD(P)H-quinone oxidoreductase subunit I, chloroplastic from Raillardella argentea (Silky raillardella).